Consider the following 29-residue polypeptide: Small ribosomal subunit protein uS7 (29 aa).

The interval 1–29 (ELIGAANRDTKSFSINRKDAKERVAKAAR) is disordered. A compositionally biased stretch (basic and acidic residues) spans 8-29 (RDTKSFSINRKDAKERVAKAAR).

This sequence belongs to the universal ribosomal protein uS7 family. In terms of assembly, part of the 30S ribosomal subunit.

Its function is as follows. One of the primary rRNA binding proteins, it binds directly to 16S rRNA where it nucleates assembly of the head domain of the 30S subunit. Is located at the subunit interface close to the decoding center. In Methanosarcina thermophila, this protein is Small ribosomal subunit protein uS7 (rps7).